The chain runs to 147 residues: Large ribosomal subunit protein uL15 (147 aa).

The span at 1–12 (MTLRLNDLKPAD) shows a compositional bias: basic and acidic residues. Positions 1 to 61 (MTLRLNDLKP…GFEGGQTPMQ (61 aa)) are disordered. The span at 23-33 (RGIGSGLGKTA) shows a compositional bias: gly residues. Over residues 34–47 (GRGHKGSFARKGGG) the composition is skewed to basic residues.

Belongs to the universal ribosomal protein uL15 family. In terms of assembly, part of the 50S ribosomal subunit.

Functionally, binds to the 23S rRNA. This Xanthomonas oryzae pv. oryzae (strain MAFF 311018) protein is Large ribosomal subunit protein uL15.